The primary structure comprises 412 residues: tRNA pseudouridine synthase Pus10 (412 aa).

Residues 73–197 enclose the THUMP domain; that stretch reads HEPSIKFLSN…TGSVEVQIMP (125 aa). Substrate is bound by residues Tyr-308 and Tyr-376.

The protein belongs to the pseudouridine synthase Pus10 family.

It carries out the reaction uridine(54) in tRNA = pseudouridine(54) in tRNA. It catalyses the reaction uridine(55) in tRNA = pseudouridine(55) in tRNA. Its function is as follows. Responsible for synthesis of pseudouridine from uracil-54 and uracil-55 in the psi GC loop of transfer RNAs. In Vulcanisaeta distributa (strain DSM 14429 / JCM 11212 / NBRC 100878 / IC-017), this protein is tRNA pseudouridine synthase Pus10.